The chain runs to 357 residues: Membrane-bound lytic murein transglycosylase C (357 aa).

The signal sequence occupies residues 1 to 17 (MKLKKFLVLLLIPFLYA). Residue Cys-18 is the site of N-palmitoyl cysteine attachment. Cys-18 carries the S-diacylglycerol cysteine lipid modification.

This sequence belongs to the transglycosylase Slt family.

The protein localises to the cell outer membrane. It carries out the reaction Exolytic cleavage of the (1-&gt;4)-beta-glycosidic linkage between N-acetylmuramic acid (MurNAc) and N-acetylglucosamine (GlcNAc) residues in peptidoglycan, from either the reducing or the non-reducing ends of the peptidoglycan chains, with concomitant formation of a 1,6-anhydrobond in the MurNAc residue.. Murein-degrading enzyme. May play a role in recycling of muropeptides during cell elongation and/or cell division. The protein is Membrane-bound lytic murein transglycosylase C of Mannheimia succiniciproducens (strain KCTC 0769BP / MBEL55E).